The chain runs to 367 residues: Serine/threonine-protein kinase Sgk2 (367 aa).

A disordered region spans residues 1-28 (MASSPVGVPSPQPSRANGNINLGPSANP). Serine 10 is subject to Phosphoserine. Residues 15–28 (RANGNINLGPSANP) show a composition bias toward polar residues. Residues 35-292 (FDFLKVIGKG…FLDIKNHMFF (258 aa)) form the Protein kinase domain. Residues 41–49 (IGKGNYGKV) and lysine 64 each bind ATP. Residues 68-78 (KKSILKNKEQN) carry the Nuclear localization signal motif. The Proton acceptor role is filled by aspartate 159. Threonine 193 bears the Phosphothreonine; by PDPK1 mark. One can recognise an AGC-kinase C-terminal domain in the interval 293–367 (SPINWDDLYH…AQDDDDILDS (75 aa)). A phosphoserine mark is found at serine 334 and serine 356. Tyrosine 357 carries the phosphotyrosine modification.

The protein belongs to the protein kinase superfamily. AGC Ser/Thr protein kinase family. Activated by phosphorylation on Ser-356 by an unknown kinase (may be mTORC2 but not confirmed), transforming it into a substrate for PDPK1 which then phosphorylates it on Thr-193.

It is found in the cytoplasm. The protein resides in the nucleus. The enzyme catalyses L-seryl-[protein] + ATP = O-phospho-L-seryl-[protein] + ADP + H(+). It catalyses the reaction L-threonyl-[protein] + ATP = O-phospho-L-threonyl-[protein] + ADP + H(+). With respect to regulation, two specific sites, one in the kinase domain (Thr-193) and the other in the C-terminal regulatory region (Ser-356), need to be phosphorylated for its full activation. Functionally, serine/threonine-protein kinase which is involved in the regulation of a wide variety of ion channels, membrane transporters, cell growth, survival and proliferation. Up-regulates Na(+) channels: SCNN1A/ENAC, K(+) channels: KCNA3/Kv1.3, KCNE1 and KCNQ1, amino acid transporter: SLC6A19, glutamate transporter: SLC1A6/EAAT4, glutamate receptors: GRIA1/GLUR1 and GRIK2/GLUR6, Na(+)/H(+) exchanger: SLC9A3/NHE3, and the Na(+)/K(+) ATPase. This chain is Serine/threonine-protein kinase Sgk2 (Sgk2), found in Mus musculus (Mouse).